The following is a 654-amino-acid chain: Translation factor GUF1, mitochondrial (654 aa).

One can recognise a tr-type G domain in the interval 57–237; the sequence is ENYRNFSIVA…SVIKNIPSPV (181 aa). Residues 66–73, 130–134, and 184–187 contribute to the GTP site; these read AHVDHGKS, DTPGH, and NKID.

Belongs to the TRAFAC class translation factor GTPase superfamily. Classic translation factor GTPase family. LepA subfamily.

The protein resides in the mitochondrion inner membrane. The enzyme catalyses GTP + H2O = GDP + phosphate + H(+). Functionally, promotes mitochondrial protein synthesis. May act as a fidelity factor of the translation reaction, by catalyzing a one-codon backward translocation of tRNAs on improperly translocated ribosomes. Binds to mitochondrial ribosomes in a GTP-dependent manner. This Candida albicans (strain SC5314 / ATCC MYA-2876) (Yeast) protein is Translation factor GUF1, mitochondrial.